The primary structure comprises 326 residues: Ras association domain-containing protein 2 (326 aa).

The 89-residue stretch at 176 to 264 folds into the Ras-associating domain; the sequence is YNHKTSVFTP…SKVFLMEKDQ (89 aa). The region spanning 272 to 319 is the SARAH domain; the sequence is VAQYIKFEMPVLKSFIQKLQEEEDREVEKLMRKYTVLRLMIRQRLEEI.

Interacts directly with activated KRAS in a GTP-dependent manner. Interacts (via SARAH domain) with STK3/MST2 and STK4/MST1. In terms of processing, phosphorylated by STK3/MST2 and STK4/MST1.

It is found in the nucleus. The protein resides in the cytoplasm. The protein localises to the chromosome. It localises to the centromere. Its subcellular location is the kinetochore. Its function is as follows. Potential tumor suppressor. Acts as a KRAS-specific effector protein. May promote apoptosis and cell cycle arrest. Stabilizes STK3/MST2 by protecting it from proteasomal degradation. The sequence is that of Ras association domain-containing protein 2 (Rassf2) from Mus musculus (Mouse).